A 396-amino-acid polypeptide reads, in one-letter code: Elongation factor Tu (396 aa).

In terms of domain architecture, tr-type G spans 10 to 206 (KPHVNVGTIG…ALDSYIPTPE (197 aa)). A G1 region spans residues 19–26 (GHVDHGKT). 19-26 (GHVDHGKT) contributes to the GTP binding site. Mg(2+) is bound at residue threonine 26. The tract at residues 60-64 (GITIN) is G2. Residues 81 to 84 (DCPG) form a G3 region. GTP-binding positions include 81–85 (DCPGH) and 136–139 (NKCD). Positions 136–139 (NKCD) are G4. Positions 174-176 (SAK) are G5.

Belongs to the TRAFAC class translation factor GTPase superfamily. Classic translation factor GTPase family. EF-Tu/EF-1A subfamily. As to quaternary structure, monomer.

The protein resides in the cytoplasm. It catalyses the reaction GTP + H2O = GDP + phosphate + H(+). GTP hydrolase that promotes the GTP-dependent binding of aminoacyl-tRNA to the A-site of ribosomes during protein biosynthesis. In Methylibium petroleiphilum (strain ATCC BAA-1232 / LMG 22953 / PM1), this protein is Elongation factor Tu.